A 68-amino-acid chain; its full sequence is Large ribosomal subunit protein bL35 (68 aa).

The disordered stretch occupies residues 29 to 68 (GGVSHYNTKKSSKRKRQGRKPQYVPKNLEHKVKALLPNDV). Residues 35-47 (NTKKSSKRKRQGR) are compositionally biased toward basic residues.

The protein belongs to the bacterial ribosomal protein bL35 family.

The polypeptide is Large ribosomal subunit protein bL35 (Sulfurihydrogenibium sp. (strain YO3AOP1)).